The sequence spans 316 residues: Ribosomal RNA small subunit methyltransferase H (316 aa).

Residues 35–37, Asp55, Phe84, Asp105, and Gln112 contribute to the S-adenosyl-L-methionine site; that span reads SGH.

Belongs to the methyltransferase superfamily. RsmH family.

It localises to the cytoplasm. The enzyme catalyses cytidine(1402) in 16S rRNA + S-adenosyl-L-methionine = N(4)-methylcytidine(1402) in 16S rRNA + S-adenosyl-L-homocysteine + H(+). Functionally, specifically methylates the N4 position of cytidine in position 1402 (C1402) of 16S rRNA. This Streptococcus pyogenes serotype M4 (strain MGAS10750) protein is Ribosomal RNA small subunit methyltransferase H.